A 774-amino-acid chain; its full sequence is Beta-xylosidase/alpha-L-arabinofuranosidase 1 (774 aa).

A signal peptide spans 1–33 (ANTKNREPKVSSVFLCFSIFYVTVLLNCNHVYG). N-linked (GlcNAc...) asparagine glycans are attached at residues Asn-48 and Asn-136. The active site involves Asp-303. 2 N-linked (GlcNAc...) asparagine glycosylation sites follow: Asn-437 and Asn-530.

This sequence belongs to the glycoside hydrolase 3 family. In terms of processing, proteolytically cleaved in roots to form a 65 kDa protein.

Its subcellular location is the secreted. It is found in the extracellular space. It localises to the extracellular matrix. The catalysed reaction is Hydrolysis of (1-&gt;4)-beta-D-xylans, to remove successive D-xylose residues from the non-reducing termini.. It catalyses the reaction Hydrolysis of terminal non-reducing alpha-L-arabinofuranoside residues in alpha-L-arabinosides.. A bifunctional beta-xylosidase/alpha-L-arabinosidase, exo-enzyme that acts synergistically with endohydrolases. Releases xylose and arabinose from cell walls. Does not cleave xylan from oat spelts although xylan from oat spelts was degraded to xylose when this enzyme was used in combination with xylanase. Also releases xylose and arabinose from aryl glycosides, xylo-oligosaccharides, arabinan from sugar beet and arabino-oligosaccharides, arabinan from sugar beet and arabinoxylan from wheat. The sequence is that of Beta-xylosidase/alpha-L-arabinofuranosidase 1 from Medicago sativa subsp. varia (Alfalfa).